A 426-amino-acid chain; its full sequence is Casein kinase I (426 aa).

Residues 9–278 (YRISRKIGGG…LRKLLREMFV (270 aa)) form the Protein kinase domain. Residues 15–23 (IGGGSFGEI) and K38 each bind ATP. The active-site Proton acceptor is the D128. Disordered stretches follow at residues 340–360 (TTTT…TVSN) and 377–426 (PSYN…PPAK). Polar residues predominate over residues 345–360 (SSSQPSNVKNISTVSN). A compositionally biased stretch (low complexity) spans 386-404 (QSPQQTTTTTSSSNPNQTT). Over residues 414–426 (PQSSSTTTKPPAK) the composition is skewed to polar residues.

Belongs to the protein kinase superfamily. CK1 Ser/Thr protein kinase family. Casein kinase I subfamily. In terms of assembly, monomer. Post-translationally, autophosphorylated.

The protein resides in the cytoplasm. It localises to the nucleus. The catalysed reaction is L-seryl-[protein] + ATP = O-phospho-L-seryl-[protein] + ADP + H(+). The enzyme catalyses L-threonyl-[protein] + ATP = O-phospho-L-threonyl-[protein] + ADP + H(+). Casein kinases are operationally defined by their preferential utilization of acidic proteins such as caseins as substrates. Can phosphorylate a large number of proteins. May have a role in DNA repair mechanism and support vegetative growth of the cells. This chain is Casein kinase I (cak1-1), found in Dictyostelium discoideum (Social amoeba).